Here is a 166-residue protein sequence, read N- to C-terminus: NAD(P)H-quinone oxidoreductase subunit I, chloroplastic (166 aa).

4Fe-4S ferredoxin-type domains are found at residues 55–84 and 95–124; these read GRIHFEFDKCIACEVCVRVCPIDLPVVDWK and LNYSIDFGICIFCGNCVEYCPTNCLSMTEE. Positions 64, 67, 70, 74, 104, 107, 110, and 114 each coordinate [4Fe-4S] cluster.

The protein belongs to the complex I 23 kDa subunit family. NDH is composed of at least 16 different subunits, 5 of which are encoded in the nucleus. Requires [4Fe-4S] cluster as cofactor.

It localises to the plastid. Its subcellular location is the chloroplast thylakoid membrane. The catalysed reaction is a plastoquinone + NADH + (n+1) H(+)(in) = a plastoquinol + NAD(+) + n H(+)(out). It carries out the reaction a plastoquinone + NADPH + (n+1) H(+)(in) = a plastoquinol + NADP(+) + n H(+)(out). Its function is as follows. NDH shuttles electrons from NAD(P)H:plastoquinone, via FMN and iron-sulfur (Fe-S) centers, to quinones in the photosynthetic chain and possibly in a chloroplast respiratory chain. The immediate electron acceptor for the enzyme in this species is believed to be plastoquinone. Couples the redox reaction to proton translocation, and thus conserves the redox energy in a proton gradient. In Marshallia caespitosa (Barbara's buttons), this protein is NAD(P)H-quinone oxidoreductase subunit I, chloroplastic.